A 462-amino-acid chain; its full sequence is Argininosuccinate lyase (462 aa).

It belongs to the lyase 1 family. Argininosuccinate lyase subfamily.

It localises to the cytoplasm. It catalyses the reaction 2-(N(omega)-L-arginino)succinate = fumarate + L-arginine. It functions in the pathway amino-acid biosynthesis; L-arginine biosynthesis; L-arginine from L-ornithine and carbamoyl phosphate: step 3/3. This Methylobacterium nodulans (strain LMG 21967 / CNCM I-2342 / ORS 2060) protein is Argininosuccinate lyase.